A 184-amino-acid polypeptide reads, in one-letter code: Elongation factor P (184 aa).

Belongs to the elongation factor P family.

It localises to the cytoplasm. The protein operates within protein biosynthesis; polypeptide chain elongation. Its function is as follows. Involved in peptide bond synthesis. Stimulates efficient translation and peptide-bond synthesis on native or reconstituted 70S ribosomes in vitro. Probably functions indirectly by altering the affinity of the ribosome for aminoacyl-tRNA, thus increasing their reactivity as acceptors for peptidyl transferase. The polypeptide is Elongation factor P (Leptothrix cholodnii (strain ATCC 51168 / LMG 8142 / SP-6) (Leptothrix discophora (strain SP-6))).